We begin with the raw amino-acid sequence, 718 residues long: MDFTRDDNSSDERENDVDANTNNRHEKKGYHRHTNEQIHRLETYFKECPHPDEFQRRLLGEELNLKPKQIKFWFQNKRTQAKSHNEKADNAALRAENIKIRRENESMEDALNNVVCPPCGGRGPGREDQLRHLQKLRAQNAYLKDEYERVSNYLKQYGGHSMHNVEATPYLHGPSNHASTSKNRPALYGTSSNRLPEPSSIFRGPYTRGNMNTTAPPQPRKPLEMQNFQPLSQLEKIAMLEAAEKAVSEVLSLIQMDDTMWKKSSIDDRLVIDPGLYEKYFTKTNTNGRPESSKDVVVVQMDAGNLIDIFLTAEKWARLFPTIVNEAKTIHVLDSVDHRGKTFSRVIYEQLHILSPLVPPREFMILRTCQQIEDNVWMIADVSCHLPNIEFDLSFPICTKRPSGVLIQALPHGFSKVTWIEHVVVNDNRVRPHKLYRDLLYGGFGYGARRWTVTLERTCERLIFSTSVPALPNNDNPGVVQTIRGRNSVMHLGERMLRNFAWMMKMVNKLDFSPQSETNNSGIRIGVRINNEAGQPPGLIVCAGSSLSLPLPPVQVYDFLKNLEVRHQWDVLCHGNPATEAARFVTGSNPRNTVSFLEPSIRDINTKLMILQDSFKDALGGMVAYAPMDLNTACAAISGDIDPTTIPILPSGFMISRDGRPSEGEAEGGSYTLLTVAFQILVSGPSYSPDTNLEVSATTVNTLISSTVQRIKAMLKCE.

Positions 1-12 (MDFTRDDNSSDE) are enriched in basic and acidic residues. Residues 1–35 (MDFTRDDNSSDERENDVDANTNNRHEKKGYHRHTN) form a disordered region. Positions 26–85 (EKKGYHRHTNEQIHRLETYFKECPHPDEFQRRLLGEELNLKPKQIKFWFQNKRTQAKSHN) form a DNA-binding region, homeobox. A coiled-coil region spans residues 78–152 (RTQAKSHNEK…LKDEYERVSN (75 aa)). The interval 169-209 (PYLHGPSNHASTSKNRPALYGTSSNRLPEPSSIFRGPYTRG) is disordered. Over residues 176–194 (NHASTSKNRPALYGTSSNR) the composition is skewed to polar residues. Positions 232–464 (SQLEKIAMLE…LERTCERLIF (233 aa)) constitute an START domain.

This sequence belongs to the HD-ZIP homeobox family. Class IV subfamily. In terms of tissue distribution, expressed in anthers with highest levels in the tapetum and pollen grains, and chalazal end of the embryo sac.

It localises to the nucleus. In terms of biological role, probable transcription factor that binds to the DNA sequence 5'-GCATTAAATGCGCA-3'. The sequence is that of Homeobox-leucine zipper protein HDG9 (HDG9) from Arabidopsis thaliana (Mouse-ear cress).